We begin with the raw amino-acid sequence, 386 residues long: NADH kinase pos5, mitochondrial (386 aa).

The transit peptide at 1–42 directs the protein to the mitochondrion; that stretch reads MIRAANGFRISVRNTAVCLAPNFRQLKGFSIINLGSLQYFRY.

Belongs to the NAD kinase family.

Its subcellular location is the mitochondrion. It carries out the reaction NADH + ATP = ADP + NADPH + H(+). Its function is as follows. Phosphorylates both NADH and NAD(+), with a preference for NADH. Anti-oxidant factor and key source of the cellular reductant NADPH. This Schizosaccharomyces pombe (strain 972 / ATCC 24843) (Fission yeast) protein is NADH kinase pos5, mitochondrial (pos5).